The following is a 366-amino-acid chain: Chorismate synthase (366 aa).

NADP(+)-binding residues include Arg48 and Arg54. FMN-binding positions include 125-127, 238-239, Gly278, 293-297, and Arg319; these read RSS, NA, and KPTSS.

Belongs to the chorismate synthase family. In terms of assembly, homotetramer. It depends on FMNH2 as a cofactor.

The enzyme catalyses 5-O-(1-carboxyvinyl)-3-phosphoshikimate = chorismate + phosphate. It functions in the pathway metabolic intermediate biosynthesis; chorismate biosynthesis; chorismate from D-erythrose 4-phosphate and phosphoenolpyruvate: step 7/7. Catalyzes the anti-1,4-elimination of the C-3 phosphate and the C-6 proR hydrogen from 5-enolpyruvylshikimate-3-phosphate (EPSP) to yield chorismate, which is the branch point compound that serves as the starting substrate for the three terminal pathways of aromatic amino acid biosynthesis. This reaction introduces a second double bond into the aromatic ring system. This chain is Chorismate synthase, found in Neisseria meningitidis serogroup C / serotype 2a (strain ATCC 700532 / DSM 15464 / FAM18).